The sequence spans 236 residues: Small ribosomal subunit protein uS2c (236 aa).

This sequence belongs to the universal ribosomal protein uS2 family.

The protein resides in the plastid. Its subcellular location is the chloroplast. This chain is Small ribosomal subunit protein uS2c (rps2), found in Lepidium virginicum (Virginia pepperweed).